A 201-amino-acid polypeptide reads, in one-letter code: Large ribosomal subunit protein uL4 (201 aa).

The segment at 44-68 is disordered; that stretch reads KAQKTRSEVAGTTKKSKKQKGGGAR.

It belongs to the universal ribosomal protein uL4 family. Part of the 50S ribosomal subunit.

One of the primary rRNA binding proteins, this protein initially binds near the 5'-end of the 23S rRNA. It is important during the early stages of 50S assembly. It makes multiple contacts with different domains of the 23S rRNA in the assembled 50S subunit and ribosome. In terms of biological role, forms part of the polypeptide exit tunnel. This Xanthomonas oryzae pv. oryzae (strain MAFF 311018) protein is Large ribosomal subunit protein uL4.